We begin with the raw amino-acid sequence, 643 residues long: Phosphomethylpyrimidine synthase (643 aa).

Substrate-binding positions include Asn221, Met250, Tyr279, His315, 335–337 (SRG), 376–379 (DGLR), and Glu415. His419 is a binding site for Zn(2+). A substrate-binding site is contributed by Tyr442. His483 is a Zn(2+) binding site. Residues Cys563, Cys566, and Cys571 each contribute to the [4Fe-4S] cluster site.

The protein belongs to the ThiC family. Homodimer. Requires [4Fe-4S] cluster as cofactor.

The enzyme catalyses 5-amino-1-(5-phospho-beta-D-ribosyl)imidazole + S-adenosyl-L-methionine = 4-amino-2-methyl-5-(phosphooxymethyl)pyrimidine + CO + 5'-deoxyadenosine + formate + L-methionine + 3 H(+). It participates in cofactor biosynthesis; thiamine diphosphate biosynthesis. Its function is as follows. Catalyzes the synthesis of the hydroxymethylpyrimidine phosphate (HMP-P) moiety of thiamine from aminoimidazole ribotide (AIR) in a radical S-adenosyl-L-methionine (SAM)-dependent reaction. In Nitrobacter hamburgensis (strain DSM 10229 / NCIMB 13809 / X14), this protein is Phosphomethylpyrimidine synthase.